The primary structure comprises 613 residues: tRNA 5-methylaminomethyl-2-thiouridine biosynthesis bifunctional protein MnmC (613 aa).

Positions 1 to 225 are tRNA (mnm(5)s(2)U34)-methyltransferase; it reads MKKAKLIFKD…KREMIKAYLE (225 aa). The interval 252–613 is FAD-dependent cmnm(5)s(2)U34 oxidoreductase; it reads IGAGISSAVL…FLIRKLKKGL (362 aa).

This sequence in the N-terminal section; belongs to the methyltransferase superfamily. tRNA (mnm(5)s(2)U34)-methyltransferase family. In the C-terminal section; belongs to the DAO family. The cofactor is FAD.

The protein localises to the cytoplasm. It catalyses the reaction 5-aminomethyl-2-thiouridine(34) in tRNA + S-adenosyl-L-methionine = 5-methylaminomethyl-2-thiouridine(34) in tRNA + S-adenosyl-L-homocysteine + H(+). Its function is as follows. Catalyzes the last two steps in the biosynthesis of 5-methylaminomethyl-2-thiouridine (mnm(5)s(2)U) at the wobble position (U34) in tRNA. Catalyzes the FAD-dependent demodification of cmnm(5)s(2)U34 to nm(5)s(2)U34, followed by the transfer of a methyl group from S-adenosyl-L-methionine to nm(5)s(2)U34, to form mnm(5)s(2)U34. This is tRNA 5-methylaminomethyl-2-thiouridine biosynthesis bifunctional protein MnmC from Campylobacter jejuni subsp. jejuni serotype O:6 (strain 81116 / NCTC 11828).